The following is a 637-amino-acid chain: DNA primase (637 aa).

Residues 39–63 (CPFHGEKTPSFNVNAEKGFYHCFGC) form a CHC2-type zinc finger. Residues 257-338 (HEVYLMEGFM…QIVKVPEGLD (82 aa)) form the Toprim domain. 3 residues coordinate Mg(2+): Glu263, Asp307, and Asp309.

This sequence belongs to the DnaG primase family. Monomer. Interacts with DnaB. The cofactor is Zn(2+). Mg(2+) serves as cofactor.

The enzyme catalyses ssDNA + n NTP = ssDNA/pppN(pN)n-1 hybrid + (n-1) diphosphate.. Its function is as follows. RNA polymerase that catalyzes the synthesis of short RNA molecules used as primers for DNA polymerase during DNA replication. The polypeptide is DNA primase (Lactococcus lactis subsp. lactis (strain IL1403) (Streptococcus lactis)).